The primary structure comprises 435 residues: Methylenetetrahydrofolate--tRNA-(uracil-5-)-methyltransferase TrmFO (435 aa).

Position 10–15 (10–15) interacts with FAD; that stretch reads GAGLAG.

Belongs to the MnmG family. TrmFO subfamily. FAD is required as a cofactor.

It is found in the cytoplasm. The catalysed reaction is uridine(54) in tRNA + (6R)-5,10-methylene-5,6,7,8-tetrahydrofolate + NADH + H(+) = 5-methyluridine(54) in tRNA + (6S)-5,6,7,8-tetrahydrofolate + NAD(+). The enzyme catalyses uridine(54) in tRNA + (6R)-5,10-methylene-5,6,7,8-tetrahydrofolate + NADPH + H(+) = 5-methyluridine(54) in tRNA + (6S)-5,6,7,8-tetrahydrofolate + NADP(+). Catalyzes the folate-dependent formation of 5-methyl-uridine at position 54 (M-5-U54) in all tRNAs. The chain is Methylenetetrahydrofolate--tRNA-(uracil-5-)-methyltransferase TrmFO from Bacillus velezensis (strain DSM 23117 / BGSC 10A6 / LMG 26770 / FZB42) (Bacillus amyloliquefaciens subsp. plantarum).